The sequence spans 90 residues: Cell division protein CrgA (90 aa).

A disordered region spans residues 1 to 26; that stretch reads MPKAKVTKNSIAPVSSNPSANRTPVK. The span at 7–26 shows a compositional bias: polar residues; that stretch reads TKNSIAPVSSNPSANRTPVK. Transmembrane regions (helical) follow at residues 38–58 and 69–89; these read VIMFAFMLVGLLWLVANYLVG and AWNYGIGFGLLIIGLLMTMGW.

The protein belongs to the CrgA family.

The protein resides in the cell membrane. In terms of biological role, involved in cell division. This is Cell division protein CrgA from Corynebacterium efficiens (strain DSM 44549 / YS-314 / AJ 12310 / JCM 11189 / NBRC 100395).